Consider the following 378-residue polypeptide: MTNKKVVVLVAGGTGGHLFPAEALAVELRQRGYDVHLATDERAKRFVRHFDEKHIHIISSATLVRHHPFALIKTFWLLLRGMVQSWILFRKLRPVLVGGFGGYPTVPPVWVAALTGRVTFIHEQNAVMGRANRVLATRVNAIASGLLLENKIHIHKTFVTGNPVREAILKAAEIPYCASTSKQPFYFLVFGGSQGASAFSRIVPEAVKLLDHDIRERLHIVQQVRGEEIDLAKIYQDMGVQAEVAPFFDNMVEHIARSHFIMSRAGASTVCEIAIIGRPALLIPYPHALDHDQAANAALLAARGGAQIMLEKDLNAQILSSLLTKFCCEPHSLEQRALAAKKVGKPQATRVLADMAEALIVGRSLLDMKREFFDENTT.

Residues 14–16, Asn125, Arg165, Ser193, and Gln293 each bind UDP-N-acetyl-alpha-D-glucosamine; that span reads TGG.

Belongs to the glycosyltransferase 28 family. MurG subfamily.

The protein resides in the cell inner membrane. It catalyses the reaction di-trans,octa-cis-undecaprenyl diphospho-N-acetyl-alpha-D-muramoyl-L-alanyl-D-glutamyl-meso-2,6-diaminopimeloyl-D-alanyl-D-alanine + UDP-N-acetyl-alpha-D-glucosamine = di-trans,octa-cis-undecaprenyl diphospho-[N-acetyl-alpha-D-glucosaminyl-(1-&gt;4)]-N-acetyl-alpha-D-muramoyl-L-alanyl-D-glutamyl-meso-2,6-diaminopimeloyl-D-alanyl-D-alanine + UDP + H(+). It functions in the pathway cell wall biogenesis; peptidoglycan biosynthesis. In terms of biological role, cell wall formation. Catalyzes the transfer of a GlcNAc subunit on undecaprenyl-pyrophosphoryl-MurNAc-pentapeptide (lipid intermediate I) to form undecaprenyl-pyrophosphoryl-MurNAc-(pentapeptide)GlcNAc (lipid intermediate II). The sequence is that of UDP-N-acetylglucosamine--N-acetylmuramyl-(pentapeptide) pyrophosphoryl-undecaprenol N-acetylglucosamine transferase from Bartonella bacilliformis (strain ATCC 35685 / KC583 / Herrer 020/F12,63).